Consider the following 89-residue polypeptide: Small ribosomal subunit protein uS15 (89 aa).

It belongs to the universal ribosomal protein uS15 family. Part of the 30S ribosomal subunit. Forms a bridge to the 50S subunit in the 70S ribosome, contacting the 23S rRNA.

One of the primary rRNA binding proteins, it binds directly to 16S rRNA where it helps nucleate assembly of the platform of the 30S subunit by binding and bridging several RNA helices of the 16S rRNA. Its function is as follows. Forms an intersubunit bridge (bridge B4) with the 23S rRNA of the 50S subunit in the ribosome. The polypeptide is Small ribosomal subunit protein uS15 (Desulfosudis oleivorans (strain DSM 6200 / JCM 39069 / Hxd3) (Desulfococcus oleovorans)).